The primary structure comprises 68 residues: ATP synthase subunit c (68 aa).

2 helical membrane passes run isoleucine 4–isoleucine 24 and isoleucine 45–phenylalanine 65.

This sequence belongs to the ATPase C chain family. As to quaternary structure, F-type ATPases have 2 components, F(1) - the catalytic core - and F(0) - the membrane proton channel. F(1) has five subunits: alpha(3), beta(3), gamma(1), delta(1), epsilon(1). F(0) has three main subunits: a(1), b(2) and c(10-14). The alpha and beta chains form an alternating ring which encloses part of the gamma chain. F(1) is attached to F(0) by a central stalk formed by the gamma and epsilon chains, while a peripheral stalk is formed by the delta and b chains.

It is found in the cell membrane. In terms of biological role, f(1)F(0) ATP synthase produces ATP from ADP in the presence of a proton or sodium gradient. F-type ATPases consist of two structural domains, F(1) containing the extramembraneous catalytic core and F(0) containing the membrane proton channel, linked together by a central stalk and a peripheral stalk. During catalysis, ATP synthesis in the catalytic domain of F(1) is coupled via a rotary mechanism of the central stalk subunits to proton translocation. Key component of the F(0) channel; it plays a direct role in translocation across the membrane. A homomeric c-ring of between 10-14 subunits forms the central stalk rotor element with the F(1) delta and epsilon subunits. This Staphylococcus saprophyticus subsp. saprophyticus (strain ATCC 15305 / DSM 20229 / NCIMB 8711 / NCTC 7292 / S-41) protein is ATP synthase subunit c.